We begin with the raw amino-acid sequence, 504 residues long: Anaerobic nitric oxide reductase transcription regulator NorR (504 aa).

D57 is subject to 4-aspartylphosphate. Residues 187 to 416 (MIGLSPGMMQ…LEHAIHRAVV (230 aa)) form the Sigma-54 factor interaction domain. ATP-binding positions include 215–222 (GETGTGKE) and 278–287 (ADNGTLFLDE). The segment at residues 479–498 (WAACARALEMDVANLHRLAK) is a DNA-binding region (H-T-H motif).

It participates in nitrogen metabolism; nitric oxide reduction. Required for the expression of anaerobic nitric oxide (NO) reductase, acts as a transcriptional activator for at least the norVW operon. Activation also requires sigma-54. This is Anaerobic nitric oxide reductase transcription regulator NorR from Enterobacter sp. (strain 638).